The following is a 1126-amino-acid chain: Probable serine/threonine-protein kinase DDB_G0280111 (1126 aa).

The region spanning 16-295 (LNFVKQIAEG…NLLRNQQPLF (280 aa)) is the Protein kinase domain. Residues 22-30 (IAEGGFSYV) and lysine 45 each bind ATP. Aspartate 147 functions as the Proton acceptor in the catalytic mechanism. Residues 314–333 (NNNNNINNNNNNNIVNGKNI) show a composition bias toward low complexity. Disordered regions lie at residues 314–469 (NNNN…NGNN), 760–901 (LNLN…QQQQ), 944–1072 (TPSS…DEVR), and 1095–1126 (NKQS…GLLN). The span at 347-364 (TPTPPPPAPSQSPSPSPS) shows a compositional bias: pro residues. Residues 367–390 (VVNNIENNSNGLEHSNSNGNISQP) are compositionally biased toward polar residues. Composition is skewed to low complexity over residues 413-422 (PPNNSNNSFD), 432-469 (NLSN…NGNN), and 760-795 (LNLN…LNSS). 2 stretches are compositionally biased toward polar residues: residues 796–825 (FDNI…SESG) and 833–845 (EPTS…YQQS). Residues 846-856 (NNNNNNNNNNN) show a composition bias toward low complexity. Residues 857-866 (GTPISLTPGS) are compositionally biased toward polar residues. 3 stretches are compositionally biased toward low complexity: residues 886 to 901 (QQQQ…QQQQ), 953 to 971 (PSTG…QQSQ), and 1003 to 1035 (NVNI…NPNL). The segment covering 1095-1105 (NKQSRMNNPNN) has biased composition (polar residues). The segment covering 1108–1126 (DEGDSGFGDGEEEDEGLLN) has biased composition (acidic residues).

It belongs to the protein kinase superfamily. Ser/Thr protein kinase family.

It catalyses the reaction L-seryl-[protein] + ATP = O-phospho-L-seryl-[protein] + ADP + H(+). It carries out the reaction L-threonyl-[protein] + ATP = O-phospho-L-threonyl-[protein] + ADP + H(+). In Dictyostelium discoideum (Social amoeba), this protein is Probable serine/threonine-protein kinase DDB_G0280111.